We begin with the raw amino-acid sequence, 1044 residues long: MELAVGASEATMRSLLGKLGNLLAQEYSLVSGVRGDIQYINDELASMQAFLRDLSVVTEGHNHDNRRKDWMKQIRDVAYDVEDCIDDFAHRLPQDSISDAKCSFILTKMYELLTWWPRRDIASRIAELKVRAQQIADRRNRYGVNNPEHCDSSNSPRPRAHAAAQDIAEYQDTKPQIVSIKEPVGMKTVMENLEKWLTEPQPDKGRAVLSIVGFGGVGKTTIAMALYRKVSGKFDCQASVAVSQNYDEDEVLRSILNQVSKQEEAGGSTESSSRDENTREPQGSSSTSSREENTAESGTKRMLNKLKKALPLSLLGGNDDKTSVRQQETMGSLQLREELKRRLAEKRYILLIDDIWSAKTWNSIIIPFLPSENDKDSRIIVTTRFHAVGSTCSPRHKNDEATSSPGHGKDLLHKVDFLTGDKPLDLFNASIPDPMKRTDRDKKLSKICGGLPLAIVTMAGLVACNPNKANSDWSKLCESLFPYPVTTLNLDGVTRILDCCYNDLPADLKTCLLYLSIFPKGWKISRKRLARRWIAEGFATEKQGLTEEEVAEAYFNQLARRNLIRPVEHGSNGKVKAFQVHDMVLEYIMSKSIEENFITVVGGHWQMTAPSNKVRRLSLQSSGSKHGNSTKGLNLAQVRSLTVFGNLNHVPFHSFNYGIIQVLDLEGWKGLKERHVTEICQMLVLKYLSIRRTEIAKIPSKIEKLEYLETLDIRETYVEELPKSVGQLKRISSILGGNKNTRKGLRLPQEKRNKAMKNPSPQGKTKEPAEKGFLSQEKAKGTMKSLRVLSGIEIVDESAAVAASLHQLTGLRKLAIYKLKISEENDTFKELLSSIEYLGSCGLQTLAINDENSKFINSLYNMSAPPRYLVSLELSGKLKWLPEWITSITTLNKLTISITVLTTETLEILRNLPSLFSLTFAFSLSAAKQDQDTVKGILEDNKLATDGEIVIPAKEFKSLKLLRFFAPFVPKLSFPDKSAMPALEIIEMRFQEFEGLFGIEILENLREVHLKVSDGAEAITKFLVSDLKDNTEKPKVFVDGIVTA.

A structured coiled coil (CC) domain region spans residues 3–184 (LAVGASEATM…PQIVSIKEPV (182 aa)). Residues 187–543 (KTVMENLEKW…IAEGFATEKQ (357 aa)) enclose the NB-ARC domain. Positions 258 to 302 (QVSKQEEAGGSTESSSRDENTREPQGSSSTSSREENTAESGTKRM) are disordered. LRR repeat units follow at residues 635 to 657 (LAQVRSLTVFGNLNHVPFHSFNY), 682 to 705 (MLVLKYLSIRRTEIAKIPSKIEKL), and 706 to 728 (EYLETLDIRETYVEELPKSVGQL). The disordered stretch occupies residues 737-771 (GNKNTRKGLRLPQEKRNKAMKNPSPQGKTKEPAEK). 6 LRR repeats span residues 808-834 (LTGLRKLAIYKLKISEENDTFKELLSS), 840-862 (SCGLQTLAINDENSKFINSLYNM), 866-888 (PRYLVSLELSGKLKWLPEWITSI), 889-911 (TTLNKLTISITVLTTETLEILRN), 935-958 (KGILEDNKLATDGEIVIPAKEFKS), and 980-1004 (MPALEIIEMRFQEFEGLFGIEILEN).

Belongs to the disease resistance NB-LRR family.

In terms of biological role, probable disease resistance protein. Resistance proteins guard the plant against pathogens that contain an appropriate avirulence protein via an indirect interaction with this avirulence protein. That triggers a defense system including the hypersensitive response, which restricts the pathogen growth. At the opposite of cultivar Kusabue, the cultivar Nipponbare doesn't recognize the effector avirulence protein AVR-Pik from M.oryzae. The chain is Disease resistance protein PIK6-NP from Oryza sativa subsp. japonica (Rice).